We begin with the raw amino-acid sequence, 300 residues long: Sulfate adenylyltransferase subunit 2 (300 aa).

Residues 281–300 are disordered; the sequence is RAIDRDEAGSMEKKKREGYF.

The protein belongs to the PAPS reductase family. CysD subfamily. Heterodimer composed of CysD, the smaller subunit, and CysN.

It carries out the reaction sulfate + ATP + H(+) = adenosine 5'-phosphosulfate + diphosphate. It functions in the pathway sulfur metabolism; hydrogen sulfide biosynthesis; sulfite from sulfate: step 1/3. With CysN forms the ATP sulfurylase (ATPS) that catalyzes the adenylation of sulfate producing adenosine 5'-phosphosulfate (APS) and diphosphate, the first enzymatic step in sulfur assimilation pathway. APS synthesis involves the formation of a high-energy phosphoric-sulfuric acid anhydride bond driven by GTP hydrolysis by CysN coupled to ATP hydrolysis by CysD. This Brucella abortus (strain 2308) protein is Sulfate adenylyltransferase subunit 2.